A 266-amino-acid chain; its full sequence is Hemin import ATP-binding protein HmuV (266 aa).

The region spanning 2–242 is the ABC transporter domain; sequence IEAVDICVQR…QNLRDVYSCS (241 aa). 34–41 is a binding site for ATP; it reads GPNGSGKS.

Belongs to the ABC transporter superfamily. Heme (hemin) importer (TC 3.A.1.14.5) family. As to quaternary structure, the complex is composed of two ATP-binding proteins (HmuV), two transmembrane proteins (HmuU) and a solute-binding protein (HmuT).

It is found in the cell inner membrane. Functionally, part of the ABC transporter complex HmuTUV involved in hemin import. Responsible for energy coupling to the transport system. The polypeptide is Hemin import ATP-binding protein HmuV (Bartonella henselae (strain ATCC 49882 / DSM 28221 / CCUG 30454 / Houston 1) (Rochalimaea henselae)).